A 1140-amino-acid polypeptide reads, in one-letter code: Calcium-activated potassium channel slo-1 (1140 aa).

Residues 1 to 44 (MGEIYSPSQSKGFNQPYGYPMNCNLSRVFMEMTEEDRKCLEERK) lie on the Extracellular side of the membrane. The helical transmembrane segment at 45-65 (YWCFLLSSITTFCASMILVVI) threads the bilayer. The Cytoplasmic portion of the chain corresponds to 66 to 139 (WRVVTHLCCQ…LISGQSLTGR (74 aa)). The chain crosses the membrane as a helical span at residues 140-161 (FLVLLVFILSIGSLIIYFYDAS). Residues 162–178 (FQNFQVETCIPWQDSPS) lie on the Extracellular side of the membrane. Residues 179 to 199 (QQIDLGFNIFFLVYFFIRFIA) traverse the membrane as a helical segment. At 200–203 (ASDK) the chain is on the cytoplasmic side. A helical membrane pass occupies residues 204–224 (VWFLLEMYSWIDFFTIPPSFV). Residues 225–228 (AIYL) lie on the Extracellular side of the membrane. The helical; Voltage-sensor transmembrane segment at 229-249 (QRNWLGFRFLRALRLMTVPDI) threads the bilayer. The Cytoplasmic portion of the chain corresponds to 250-264 (LQYLNILKTSSSIRL). Residues 265–285 (TQLVTIFVAVCLTGAGLVHLL) traverse the membrane as a helical segment. Residues 286–299 (ENSGDFFKGFINPH) lie on the Extracellular side of the membrane. The pore-forming intramembrane region spans 300 to 322 (RITYADSVYFVLVTMSTVGYGDI). Positions 316 to 319 (TVGY) match the Selectivity for potassium motif. Topologically, residues 323 to 331 (YCTTLCGRL) are extracellular. The chain crosses the membrane as a helical span at residues 332 to 352 (FMIFFILFGLAMFASYVPEIA). The Cytoplasmic portion of the chain corresponds to 353–1140 (DLIGNRQKYG…LEYEPGKRHF (788 aa)). The region spanning 371 to 514 (KKHIVVCGHI…DWKRGDDVIC (144 aa)) is the RCK N-terminal 1 domain. Positions 520 to 540 (LGFIAQSCLAPGFSTMMANLF) are segment S7. The segment S8 stretch occupies residues 578–598 (MTFPEAVDLLFNRLGLLLLAI). Residues 797-817 (VLNGHVVVCLFADQDSPLIGL) form a segment S9 region. Positions 799–953 (NGHVVVCLFA…GAKFGTNVPM (155 aa)) constitute an RCK N-terminal 2 domain. A Calcium bowl motif is present at residues 955-977 (TELVNDSNVQFLDQDDDDDPDTE). 4 residues coordinate Ca(2+): Q964, D967, D970, and D972. Residues 984–1004 (FACGTAFAISVLDSLMSTTYF) form a segment S10 region.

The protein belongs to the potassium channel family. Calcium-activated (TC 1.A.1.3) subfamily. Slo sub-subfamily. In terms of assembly, homotetramer; which constitutes the calcium-activated potassium channel. Phosphorylated. Expressed in synaptic regions of the nervous system including in both the nerve ring and nerve cords, as well as in the body-wall and vulval muscle. Expressed broadly in motor neurons. Forms puncta at presynaptic terminals of neurons, muscle excitation sites, and in the dorsal nerve cord.

It localises to the cell membrane. It is found in the synapse. Its function is as follows. Potassium channel activated by both membrane depolarization or increase in cytosolic Ca(2+) that mediates export of K(+). Its activation dampens the excitatory events that elevate the cytosolic Ca(2+) concentration and/or depolarize the cell membrane. It therefore contributes to repolarization of the membrane potential. Essential for the regulation of neurotransmitter release at synapses. Regulates longevity and age-associated decline in motor activity in mid-late life, by acting in motor neurons and through daf-16 in the intestine. When clustered in neurons, mediates ethanol-induced suppression of locomotory and egg-laying behaviors. This chain is Calcium-activated potassium channel slo-1, found in Caenorhabditis elegans.